The following is a 361-amino-acid chain: Single-stranded DNA-binding protein 2 (361 aa).

Lysine 6 carries the post-translational modification N6-acetyllysine. The 33-residue stretch at 18-50 (AREKLALYVYEYLLHVGAQKSAQTFLSEIRWEK) folds into the LisH domain. Disordered stretches follow at residues 147-171 (GGVP…HPNM) and 194-361 (GAMR…TMSV). The segment covering 204-219 (GGPGMPGMNMGPGGGR) has biased composition (gly residues). Positions 225 to 236 (TNANSIPYSSAS) are enriched in polar residues. Over residues 246–256 (GGGPPGTPIMP) the composition is skewed to pro residues. Residues 289–299 (GSDGPMGGLGG) show a composition bias toward gly residues. A compositionally biased stretch (polar residues) spans 317–332 (ISKNSPNNMSLSNQPG). Serine 321 carries the post-translational modification Phosphoserine. Threonine 333 carries the post-translational modification Phosphothreonine. Residues 346–361 (NPFQSESYSPSMTMSV) are compositionally biased toward polar residues.

As to expression, ubiquitous.

Its subcellular location is the nucleus. This Homo sapiens (Human) protein is Single-stranded DNA-binding protein 2 (SSBP2).